The sequence spans 196 residues: Nucleoid occlusion factor SlmA (196 aa).

In terms of domain architecture, HTH tetR-type spans 6–66; the sequence is RNRREEILQA…GLIEFVEDTL (61 aa). Positions 29–48 form a DNA-binding region, H-T-H motif; the sequence is TTAKLAANLGVSEAALYRHF. A coiled-coil region spans residues 108–135; it reads DALMGEHDRLRGRMEDLFNRIESSIKQI.

This sequence belongs to the nucleoid occlusion factor SlmA family. As to quaternary structure, homodimer. Interacts with FtsZ.

The protein resides in the cytoplasm. It is found in the nucleoid. Its function is as follows. Required for nucleoid occlusion (NO) phenomenon, which prevents Z-ring formation and cell division over the nucleoid. Acts as a DNA-associated cell division inhibitor that binds simultaneously chromosomal DNA and FtsZ, and disrupts the assembly of FtsZ polymers. SlmA-DNA-binding sequences (SBS) are dispersed on non-Ter regions of the chromosome, preventing FtsZ polymerization at these regions. The chain is Nucleoid occlusion factor SlmA from Idiomarina loihiensis (strain ATCC BAA-735 / DSM 15497 / L2-TR).